A 357-amino-acid chain; its full sequence is Arginine kinase Pro c 2.0101 (357 aa).

The 83-residue stretch at 9 to 91 (KLEEGFKKLE…FDPIIEDYHK (83 aa)) folds into the Phosphagen kinase N-terminal domain. 64–68 (GVGIY) contacts L-arginine. One can recognise a Phosphagen kinase C-terminal domain in the interval 119-356 (FVISTRVRCG…LELIKIEKEM (238 aa)). ATP is bound by residues 122–126 (STRVR) and histidine 185. Glutamate 225 contributes to the L-arginine binding site. Arginine 229 contacts ATP. Cysteine 271 provides a ligand contact to L-arginine. ATP-binding positions include 280–284 (RASVH) and 309–314 (RGTRGE). Glutamate 314 contacts L-arginine.

This sequence belongs to the ATP:guanido phosphotransferase family. Glycosylated. As to expression, muscle (at protein level).

It catalyses the reaction L-arginine + ATP = N(omega)-phospho-L-arginine + ADP + H(+). In terms of biological role, catalyzes the reversible transfer of high energy ATP gamma-phosphate group to L-arginine. The sequence is that of Arginine kinase Pro c 2.0101 from Procambarus clarkii (Red swamp crayfish).